We begin with the raw amino-acid sequence, 90 residues long: UPF0223 protein LMHCC_1569 (90 aa).

This sequence belongs to the UPF0223 family.

The chain is UPF0223 protein LMHCC_1569 from Listeria monocytogenes serotype 4a (strain HCC23).